Here is a 422-residue protein sequence, read N- to C-terminus: MSQPFALHHDGENQMQRRGKMNTRSNGLSGQKRAALGVITNQVNQQVRIQPSRAAKPKSSEFNIQDENAFTKKNAKTFGQQPSQFSVFVDPTPAAPVQKAPTSHVTDIPAALTTLQRVPLTEVPGSPDIISLEDSMESPMILDLPEEEKPLDREAVILTVPEYEEDIYNYLRQAEMKNRAKPGYMKRQTDITTSMRCILVDWLVEVSEEDKLHRETLFLGVNYIDRFLSKISVLRGKLQLVGAASMFLAAKYEEIYPPDVKEFAYITDDTYTSQQVLRMEHLILKVLTFDVAVPTTNWFCEDFLKSCDADDKLKSLTMFLTELTLIDMDAYLKYLPSITAAAALCLARYSLGIEPWPQNLVKKTGYEIGHFVDCLKDLHKTSLGAESHQQQAVQEKYKQDKYHQVSDFSKNPVPHNLALLAL.

Residues 1–29 (MSQPFALHHDGENQMQRRGKMNTRSNGLS) are disordered.

This sequence belongs to the cyclin family. Cyclin AB subfamily.

Essential for the control of the cell cycle at the G2/M (mitosis) transition. Interacts with the CDC2 and CDK2 protein kinases to form MPF. G2/M cyclins accumulate steadily during G2 and are abruptly destroyed at mitosis. The sequence is that of G2/mitotic-specific cyclin-A from Spisula solidissima (Atlantic surf-clam).